The sequence spans 498 residues: Glycerol kinase (498 aa).

An ADP-binding site is contributed by Thr-14. 2 residues coordinate ATP: Thr-14 and Thr-15. Position 14 (Thr-14) interacts with sn-glycerol 3-phosphate. Residue Arg-18 coordinates ADP. Positions 84, 85, 136, and 246 each coordinate sn-glycerol 3-phosphate. Glycerol is bound by residues Arg-84, Glu-85, Tyr-136, Asp-246, and Gln-247. Thr-268 and Gly-311 together coordinate ADP. ATP contacts are provided by Thr-268, Gly-311, Gln-315, and Gly-412. ADP is bound by residues Gly-412 and Asn-416.

Belongs to the FGGY kinase family.

It carries out the reaction glycerol + ATP = sn-glycerol 3-phosphate + ADP + H(+). It participates in polyol metabolism; glycerol degradation via glycerol kinase pathway; sn-glycerol 3-phosphate from glycerol: step 1/1. Its activity is regulated as follows. Inhibited by fructose 1,6-bisphosphate (FBP). Functionally, key enzyme in the regulation of glycerol uptake and metabolism. Catalyzes the phosphorylation of glycerol to yield sn-glycerol 3-phosphate. This is Glycerol kinase from Leptospira biflexa serovar Patoc (strain Patoc 1 / Ames).